Reading from the N-terminus, the 95-residue chain is Small ribosomal subunit protein uS19 (95 aa).

The tract at residues 76-95 (PTRRFGGHADKKAATKGQVR) is disordered.

Belongs to the universal ribosomal protein uS19 family.

Functionally, protein S19 forms a complex with S13 that binds strongly to the 16S ribosomal RNA. The protein is Small ribosomal subunit protein uS19 of Pseudothermotoga lettingae (strain ATCC BAA-301 / DSM 14385 / NBRC 107922 / TMO) (Thermotoga lettingae).